Here is a 297-residue protein sequence, read N- to C-terminus: 33 kDa chaperonin (297 aa).

2 disulfides stabilise this stretch: Cys239–Cys241 and Cys272–Cys275.

The protein belongs to the HSP33 family. In terms of processing, under oxidizing conditions two disulfide bonds are formed involving the reactive cysteines. Under reducing conditions zinc is bound to the reactive cysteines and the protein is inactive.

Its subcellular location is the cytoplasm. Its function is as follows. Redox regulated molecular chaperone. Protects both thermally unfolding and oxidatively damaged proteins from irreversible aggregation. Plays an important role in the bacterial defense system toward oxidative stress. This chain is 33 kDa chaperonin, found in Clostridium acetobutylicum (strain ATCC 824 / DSM 792 / JCM 1419 / IAM 19013 / LMG 5710 / NBRC 13948 / NRRL B-527 / VKM B-1787 / 2291 / W).